Here is a 371-residue protein sequence, read N- to C-terminus: Gustatory receptor-like 65a (371 aa).

Over 1–13 the chain is Cytoplasmic; that stretch reads MREVNLLNRFTRQ. Residues 14–34 traverse the membrane as a helical segment; that stretch reads FLFLIVLVTQICGVATFVYNS. Over 35 to 42 the chain is Extracellular; that stretch reads KAQCFRQS. Residues 43–63 traverse the membrane as a helical segment; the sequence is GFLRFYSSLVLIFLALFLIVT. Residues 64 to 72 are Cytoplasmic-facing; the sequence is TSKMFHNLQ. The chain crosses the membrane as a helical span at residues 73 to 93; it reads AVWPYVVGSVIILVVRIHGLL. Topologically, residues 94–126 are extracellular; sequence ESAEIVELLNQMLRIMRQVNLMARHPNLFRLKH. A helical transmembrane segment spans residues 127–147; sequence LLLLLLALQNLLRSLNTIVGI. At 148-161 the chain is on the cytoplasmic side; that stretch reads SNHSAEAYDSFLNS. A helical transmembrane segment spans residues 162–182; the sequence is VILLIILAVLLSFLLQITINI. Residues 183-251 are Extracellular-facing; that stretch reads CLFVVLIATY…FHITVRIIRH (69 aa). A helical transmembrane segment spans residues 252-272; that stretch reads FRFHWLCAIIYGLLPFFSLTA. The Cytoplasmic segment spans residues 273 to 277; it reads KDQNG. A helical membrane pass occupies residues 278-298; that stretch reads FNFLIISALNIIFQWTIFAIL. The Extracellular portion of the chain corresponds to 299 to 371; it reads SRESRITRSL…FVNRLEYLHI (73 aa).

The protein resides in the cell membrane. The polypeptide is Gustatory receptor-like 65a (Drosophila melanogaster (Fruit fly)).